Reading from the N-terminus, the 303-residue chain is Glutamyl-Q tRNA(Asp) synthetase (303 aa).

Residues 9–13 (RFAPS) and Glu45 each bind L-glutamate. The 'HIGH' region signature appears at 12–22 (PSPSGSLHFGS). Zn(2+)-binding residues include Cys101, Cys103, Tyr115, and Cys119. L-glutamate-binding residues include Tyr172 and Arg190. A 'KMSKS' region motif is present at residues 228–232 (KLSKQ). Lys231 provides a ligand contact to ATP.

The protein belongs to the class-I aminoacyl-tRNA synthetase family. GluQ subfamily. The cofactor is Zn(2+).

Functionally, catalyzes the tRNA-independent activation of glutamate in presence of ATP and the subsequent transfer of glutamate onto a tRNA(Asp). Glutamate is transferred on the 2-amino-5-(4,5-dihydroxy-2-cyclopenten-1-yl) moiety of the queuosine in the wobble position of the QUC anticodon. The sequence is that of Glutamyl-Q tRNA(Asp) synthetase from Serratia proteamaculans (strain 568).